A 223-amino-acid chain; its full sequence is Ribosomal RNA small subunit methyltransferase G (223 aa).

S-adenosyl-L-methionine-binding residues include Gly85, Phe90, and Arg154.

Belongs to the methyltransferase superfamily. RNA methyltransferase RsmG family.

The protein localises to the cytoplasm. The catalysed reaction is guanosine(527) in 16S rRNA + S-adenosyl-L-methionine = N(7)-methylguanosine(527) in 16S rRNA + S-adenosyl-L-homocysteine. Its function is as follows. Specifically methylates the N7 position of guanine in position 527 of 16S rRNA. This is Ribosomal RNA small subunit methyltransferase G from Rhodopseudomonas palustris (strain TIE-1).